The following is a 322-amino-acid chain: 2-methylene-furan-3-one reductase (322 aa).

NADP(+) contacts are provided by residues Lys-59, 174–175, 197–200, Tyr-215, Ile-253, 264–266, 311–312, and 311–322; these read GV, STKK, FVL, RA, and RATGKVVVYPIP. Residue Lys-59 coordinates substrate.

Belongs to the zinc-containing alcohol dehydrogenase family. Quinone oxidoreductase subfamily. Monomer. The N-terminus is blocked.

It carries out the reaction 4-hydroxy-2,5-dimethyl-furan-3(2H)-one + NADP(+) = 4-hydroxy-5-methyl-2-methylenefuran-3(2H)-one + NADPH + H(+). Enone oxidoreductase involved in the biosynthesis of 4-hydroxy-2,5-dimethyl-3(2H)-furanone (HDMF or furaneol), the key flavor compound in strawberries. Can use both NADH and NADPH as the electron donor. The polypeptide is 2-methylene-furan-3-one reductase (EO) (Fragaria ananassa (Strawberry)).